The sequence spans 578 residues: Longifolene synthase (578 aa).

D331, D335, and D475 together coordinate Mg(2+). The DDXXD motif signature appears at 331–335; sequence DDLYD.

This sequence belongs to the terpene synthase family. Tpsd subfamily. Mg(2+) is required as a cofactor. Mn(2+) serves as cofactor.

The catalysed reaction is (2E,6E)-farnesyl diphosphate = longifolene + diphosphate. Its pathway is sesquiterpene biosynthesis. The protein operates within terpene metabolism; oleoresin biosynthesis. Functionally, terpene synthase (TPS) involved in the biosynthesis of sesquiterpene natural products included in conifer oleoresin secretions and volatile emissions; these compounds contribute to biotic and abiotic stress defense against herbivores and pathogens. Catalyzes the conversion of (2E,6E)-farnesyl diphosphate (FPP) to longifolene. This Picea engelmannii x Picea glauca (Hybrid white spruce) protein is Longifolene synthase.